The following is a 273-amino-acid chain: ATP synthase subunit a (273 aa).

The next 5 helical transmembrane spans lie at W44–Y64, I104–I124, D149–I169, L223–W243, and A244–V264.

The protein belongs to the ATPase A chain family. In terms of assembly, F-type ATPases have 2 components, CF(1) - the catalytic core - and CF(0) - the membrane proton channel. CF(1) has five subunits: alpha(3), beta(3), gamma(1), delta(1), epsilon(1). CF(0) has three main subunits: a(1), b(2) and c(9-12). The alpha and beta chains form an alternating ring which encloses part of the gamma chain. CF(1) is attached to CF(0) by a central stalk formed by the gamma and epsilon chains, while a peripheral stalk is formed by the delta and b chains.

Its subcellular location is the cell inner membrane. Key component of the proton channel; it plays a direct role in the translocation of protons across the membrane. The polypeptide is ATP synthase subunit a (Shewanella putrefaciens (strain CN-32 / ATCC BAA-453)).